The primary structure comprises 173 residues: 2-C-methyl-D-erythritol 2,4-cyclodiphosphate synthase (173 aa).

2 residues coordinate a divalent metal cation: Asp-17 and His-19. 4-CDP-2-C-methyl-D-erythritol 2-phosphate contacts are provided by residues 17 to 19 and 49 to 50; these read DVH and HS. His-57 provides a ligand contact to a divalent metal cation. Residues 76-80, 147-150, and Arg-157 contribute to the 4-CDP-2-C-methyl-D-erythritol 2-phosphate site; these read FPNTD and TTTE.

The protein belongs to the IspF family. Homotrimer. A divalent metal cation serves as cofactor.

The enzyme catalyses 4-CDP-2-C-methyl-D-erythritol 2-phosphate = 2-C-methyl-D-erythritol 2,4-cyclic diphosphate + CMP. It functions in the pathway isoprenoid biosynthesis; isopentenyl diphosphate biosynthesis via DXP pathway; isopentenyl diphosphate from 1-deoxy-D-xylulose 5-phosphate: step 4/6. Its function is as follows. Involved in the biosynthesis of isopentenyl diphosphate (IPP) and dimethylallyl diphosphate (DMAPP), two major building blocks of isoprenoid compounds. Catalyzes the conversion of 4-diphosphocytidyl-2-C-methyl-D-erythritol 2-phosphate (CDP-ME2P) to 2-C-methyl-D-erythritol 2,4-cyclodiphosphate (ME-CPP) with a corresponding release of cytidine 5-monophosphate (CMP). The polypeptide is 2-C-methyl-D-erythritol 2,4-cyclodiphosphate synthase (Ehrlichia ruminantium (strain Welgevonden)).